A 406-amino-acid chain; its full sequence is Phosphorylase b kinase gamma catalytic chain, liver/testis isoform (406 aa).

One can recognise a Protein kinase domain in the interval 24–291 (YDPKDVIGRG…AEQALQHPFF (268 aa)). ATP contacts are provided by residues 30–38 (IGRGVSSVV) and lysine 53. The active-site Proton acceptor is aspartate 153. Residues 306 to 330 (QRFRVAVWTVLAAGRVALSAHRIRP) form a calmodulin-binding (domain-N) region. The interval 346-370 (VRRLIDNCAFRLYGHWVKKGEQQNR) is calmodulin-binding (domain-C).

This sequence belongs to the protein kinase superfamily. CAMK Ser/Thr protein kinase family. As to quaternary structure, hexadecamer of 4 heterotetramers, each composed of alpha, beta, gamma, and delta subunits. Alpha (PHKA1 or PHKA2) and beta (PHKB) are regulatory subunits, gamma (PHKG1 or PHKG2) is the catalytic subunit, and delta is calmodulin.

It carries out the reaction 2 ATP + phosphorylase b = 2 ADP + phosphorylase a.. Functionally, catalytic subunit of the phosphorylase b kinase (PHK), which mediates the neural and hormonal regulation of glycogen breakdown (glycogenolysis) by phosphorylating and thereby activating glycogen phosphorylase. May regulate glycogeneolysis in the testis. In vitro, phosphorylates PYGM. The polypeptide is Phosphorylase b kinase gamma catalytic chain, liver/testis isoform (PHKG2) (Bos taurus (Bovine)).